The chain runs to 194 residues: Small ribosomal subunit protein eS7 (194 aa).

Belongs to the eukaryotic ribosomal protein eS7 family.

The polypeptide is Small ribosomal subunit protein eS7 (RpS7) (Drosophila yakuba (Fruit fly)).